The chain runs to 124 residues: Small ribosomal subunit protein uS12 (124 aa).

A 3-methylthioaspartic acid modification is found at D89.

Belongs to the universal ribosomal protein uS12 family. Part of the 30S ribosomal subunit. Contacts proteins S8 and S17. May interact with IF1 in the 30S initiation complex.

With S4 and S5 plays an important role in translational accuracy. In terms of biological role, interacts with and stabilizes bases of the 16S rRNA that are involved in tRNA selection in the A site and with the mRNA backbone. Located at the interface of the 30S and 50S subunits, it traverses the body of the 30S subunit contacting proteins on the other side and probably holding the rRNA structure together. The combined cluster of proteins S8, S12 and S17 appears to hold together the shoulder and platform of the 30S subunit. The polypeptide is Small ribosomal subunit protein uS12 (rpsL) (Mannheimia haemolytica (Pasteurella haemolytica)).